Here is a 374-residue protein sequence, read N- to C-terminus: MSSDTLSNIFPGETTDIFESTLSDGQKFSEKKSFTKRSFCEFKDCQVEDNCEIDCSPDKKHRSSTDDSCTVRTKPDGTKIWYKNDKIHRDDDKPAIITSDGKTIWYVNGVIHRDNDLPAMVYSNGKKVWYQHNLVHRDHDKPALIDADGTKMWFRYGKYHRDNDLPAIEAGNGDLVWYKNGLLHRDGDKPSVKRANGKTIWCKNGLKHRDNDKPAYIDNNVIRWLQFGKMHRDNDKPAYVSNTGTLKWYVDDKLHRDNDLPAIINLGRSYFWYKDGLLHRDNDLPTVIDFHGEYQWHSYGKLHRDNDNPAIIRSSGICVWYLHGSFYRPDKKPPKIVDLEYYEICSVIIDRKHSHLYNYAKNLLNEHHKIYLTK.

This sequence belongs to the mimivirus L41 family.

This is an uncharacterized protein from Acanthamoeba polyphaga (Amoeba).